The chain runs to 124 residues: Small ribosomal subunit protein uS12 (124 aa).

At Asp-89 the chain carries 3-methylthioaspartic acid.

This sequence belongs to the universal ribosomal protein uS12 family. Part of the 30S ribosomal subunit. Contacts proteins S8 and S17. May interact with IF1 in the 30S initiation complex.

With S4 and S5 plays an important role in translational accuracy. Its function is as follows. Interacts with and stabilizes bases of the 16S rRNA that are involved in tRNA selection in the A site and with the mRNA backbone. Located at the interface of the 30S and 50S subunits, it traverses the body of the 30S subunit contacting proteins on the other side and probably holding the rRNA structure together. The combined cluster of proteins S8, S12 and S17 appears to hold together the shoulder and platform of the 30S subunit. This chain is Small ribosomal subunit protein uS12, found in Haemophilus ducreyi (strain 35000HP / ATCC 700724).